Here is a 172-residue protein sequence, read N- to C-terminus: Translationally-controlled tumor protein homolog (172 aa).

Residues 1-172 (MIIYRDCISQ…FKDGLEIEKC (172 aa)) form the TCTP domain. Ser46 carries the phosphoserine; by PLK1 modification.

It belongs to the TCTP family.

The protein resides in the cytoplasm. In terms of biological role, involved in calcium binding and microtubule stabilization. The protein is Translationally-controlled tumor protein homolog (TPT1) of Gallus gallus (Chicken).